The sequence spans 211 residues: Molybdenum cofactor guanylyltransferase (211 aa).

Residues 12–14 (LAG), lysine 25, asparagine 53, aspartate 71, and aspartate 101 each bind GTP. Residue aspartate 101 participates in Mg(2+) binding.

It belongs to the MobA family. Monomer. Mg(2+) is required as a cofactor.

It localises to the cytoplasm. It catalyses the reaction Mo-molybdopterin + GTP + H(+) = Mo-molybdopterin guanine dinucleotide + diphosphate. Functionally, transfers a GMP moiety from GTP to Mo-molybdopterin (Mo-MPT) cofactor (Moco or molybdenum cofactor) to form Mo-molybdopterin guanine dinucleotide (Mo-MGD) cofactor. This Acidovorax sp. (strain JS42) protein is Molybdenum cofactor guanylyltransferase.